We begin with the raw amino-acid sequence, 360 residues long: Protein Wnt-2 (360 aa).

A signal peptide spans 1–25; it reads MNVPLGGIWLWLPLLLTWLTPEVSS. Disulfide bonds link Cys76-Cys87, Cys127-Cys135, Cys137-Cys157, Cys206-Cys220, Cys208-Cys215, Cys278-Cys309, Cys294-Cys304, Cys308-Cys348, Cys324-Cys339, Cys326-Cys336, and Cys331-Cys332. Ser212 is lipidated: O-palmitoleoyl serine; by PORCN. A glycan (N-linked (GlcNAc...) asparagine) is linked at Asn295.

This sequence belongs to the Wnt family. In terms of processing, palmitoleoylation is required for efficient binding to frizzled receptors. Depalmitoleoylation leads to Wnt signaling pathway inhibition. In terms of tissue distribution, in embryos in the developing allantois, pericardium heart, and ventral-lateral mesoderm; in adults in lung, brain, heart and placenta.

The protein localises to the secreted. It is found in the extracellular space. It localises to the extracellular matrix. Its function is as follows. Ligand for members of the frizzled family of seven transmembrane receptors. Functions in the canonical Wnt/beta-catenin signaling pathway. Functions as a upstream regulator of FGF10 expression. Plays an important role in embryonic lung development. May contribute to embryonic brain development by regulating the proliferation of dopaminergic precursors and neurons. The chain is Protein Wnt-2 (Wnt2) from Mus musculus (Mouse).